Consider the following 495-residue polypeptide: Cytochrome P450 2E1 (495 aa).

298–303 is a substrate binding site; it reads FAGTET. Residue Cys-437 participates in heme binding.

It belongs to the cytochrome P450 family. In terms of assembly, interacts with chaperones HSP70 and HSP90; this interaction is required for initial targeting to mitochondria. The cofactor is heme.

It is found in the endoplasmic reticulum membrane. The protein localises to the microsome membrane. The protein resides in the mitochondrion inner membrane. It catalyses the reaction an organic molecule + reduced [NADPH--hemoprotein reductase] + O2 = an alcohol + oxidized [NADPH--hemoprotein reductase] + H2O + H(+). The catalysed reaction is (5Z,8Z,11Z)-eicosatrienoate + reduced [NADPH--hemoprotein reductase] + O2 = 19-hydroxy-(5Z,8Z,11Z)-eicosatrienoate + oxidized [NADPH--hemoprotein reductase] + H2O + H(+). The enzyme catalyses (5Z,8Z,11Z,14Z,17Z)-eicosapentaenoate + reduced [NADPH--hemoprotein reductase] + O2 = 19-hydroxy-(5Z,8Z,11Z,14Z,17Z)-eicosapentaenoate + oxidized [NADPH--hemoprotein reductase] + H2O + H(+). It carries out the reaction (4Z,7Z,10Z,13Z,16Z,19Z)-docosahexaenoate + reduced [NADPH--hemoprotein reductase] + O2 = 21-hydroxy-(4Z,7Z,10Z,13Z,16Z,19Z)-docosahexaenoate + oxidized [NADPH--hemoprotein reductase] + H2O + H(+). It catalyses the reaction dodecanoate + reduced [NADPH--hemoprotein reductase] + O2 = 11-hydroxydodecanoate + oxidized [NADPH--hemoprotein reductase] + H2O + H(+). The catalysed reaction is tetradecanoate + reduced [NADPH--hemoprotein reductase] + O2 = 13-hydroxytetradecanoate + oxidized [NADPH--hemoprotein reductase] + H2O + H(+). The enzyme catalyses 4-nitrophenol + NADPH + O2 + H(+) = 4-nitrocatechol + NADP(+) + H2O. Its pathway is lipid metabolism; fatty acid metabolism. With respect to regulation, the omega-1 hydroxylase activity is stimulated by cytochrome b5. A cytochrome P450 monooxygenase involved in the metabolism of fatty acids. Mechanistically, uses molecular oxygen inserting one oxygen atom into a substrate, and reducing the second into a water molecule, with two electrons provided by NADPH via cytochrome P450 reductase (NADPH--hemoprotein reductase). Catalyzes the hydroxylation of carbon-hydrogen bonds. Hydroxylates fatty acids specifically at the omega-1 position displaying the highest catalytic activity for saturated fatty acids. May be involved in the oxidative metabolism of xenobiotics. This is Cytochrome P450 2E1 (CYP2E1) from Sus scrofa (Pig).